A 427-amino-acid chain; its full sequence is Adenylosuccinate synthetase (427 aa).

GTP-binding positions include 12-18 (GDEGKGK) and 40-42 (GHT). The Proton acceptor role is filled by aspartate 13. Residues aspartate 13 and glycine 40 each contribute to the Mg(2+) site. Residues 13–16 (DEGK), 38–41 (NAGH), threonine 128, arginine 142, glutamine 223, threonine 238, and arginine 302 each bind IMP. The active-site Proton donor is the histidine 41. 298 to 304 (TTTGRPR) provides a ligand contact to substrate. Residues arginine 304, 330–332 (SID), and 412–414 (SVG) contribute to the GTP site.

Belongs to the adenylosuccinate synthetase family. Homodimer. The cofactor is Mg(2+).

It is found in the cytoplasm. The catalysed reaction is IMP + L-aspartate + GTP = N(6)-(1,2-dicarboxyethyl)-AMP + GDP + phosphate + 2 H(+). Its pathway is purine metabolism; AMP biosynthesis via de novo pathway; AMP from IMP: step 1/2. In terms of biological role, plays an important role in the de novo pathway of purine nucleotide biosynthesis. Catalyzes the first committed step in the biosynthesis of AMP from IMP. This Staphylococcus epidermidis (strain ATCC 12228 / FDA PCI 1200) protein is Adenylosuccinate synthetase.